The sequence spans 199 residues: Small ribosomal subunit protein uS2 (199 aa).

The protein belongs to the universal ribosomal protein uS2 family.

The sequence is that of Small ribosomal subunit protein uS2 (rps2) from Thermoplasma volcanium (strain ATCC 51530 / DSM 4299 / JCM 9571 / NBRC 15438 / GSS1).